Consider the following 1640-residue polypeptide: Basal body protein 10 (1640 aa).

A homodimerization region spans residues 11 to 64 (VLRRKLEALGYSDPLEPASLQLVQKLVEDLVHTTDSYTAVKQQCAKQAQEIAAF). A coiled-coil region spans residues 93 to 148 (AERHEREAREHYTAVKRLEDTIAELSYWKHAAAEKLASADKENAGLRKRCEELAKL). The disordered stretch occupies residues 154-185 (SGAATPQSVAPKISSRSPIRVAPPPSPPRPRQ). The segment covering 174–183 (VAPPPSPPRP) has biased composition (pro residues). Coiled coils occupy residues 191 to 232 (LQAA…RDVE), 260 to 332 (ILQL…LQDT), 370 to 411 (VERL…AQSR), 461 to 722 (FAAL…AEAD), 758 to 960 (ARQM…AQAA), 1010 to 1030 (GEAL…LVRE), 1059 to 1086 (RASA…LAAE), 1129 to 1282 (INQY…LQAS), 1323 to 1494 (AKDQ…AERD), and 1523 to 1557 (AELA…TRAT). The span at 1592-1618 (GQGQVQGPAGTAPAAAAGAPGPQPGQA) shows a compositional bias: low complexity. The interval 1592–1640 (GQGQVQGPAGTAPAAAAGAPGPQPGQAQAGGFGGAHGGGSISLSGGPRR) is disordered. Positions 1619-1631 (QAGGFGGAHGGGS) are enriched in gly residues.

It belongs to the CEP135/TSGA10 family. Homodimer.

It localises to the cytoplasm. Its subcellular location is the cytoskeleton. The protein localises to the microtubule organizing center. The protein resides in the centrosome. It is found in the centriole. Its function is as follows. Microtubule-binding protein essential for cytoskeletal organization (e.g. rootlet microtubule bundles) and flagellar basal body/centriole assembly. The polypeptide is Basal body protein 10 (Chlamydomonas reinhardtii (Chlamydomonas smithii)).